A 419-amino-acid chain; its full sequence is Putative polyketide beta-ketoacyl synthase 2 (419 aa).

Residues 10–413 (TRRTAVTGIG…GSNAALVLRP (404 aa)) enclose the Ketosynthase family 3 (KS3) domain.

This sequence belongs to the thiolase-like superfamily. Beta-ketoacyl-ACP synthases family.

The protein operates within antibiotic biosynthesis; curamycin biosynthesis. This Streptomyces cyaneus (Streptomyces curacoi) protein is Putative polyketide beta-ketoacyl synthase 2 (curB).